Consider the following 652-residue polypeptide: DNA ligase (652 aa).

Residues 29-33 (DSDYD), 78-79 (SL), and glutamate 107 each bind NAD(+). Lysine 109 serves as the catalytic N6-AMP-lysine intermediate. Residues arginine 130, glutamate 164, lysine 278, and lysine 302 each contribute to the NAD(+) site. Residues cysteine 395, cysteine 398, cysteine 413, and cysteine 418 each contribute to the Zn(2+) site. The region spanning 577 to 652 (NSDAALFGLT…IEDEDWLRQL (76 aa)) is the BRCT domain.

This sequence belongs to the NAD-dependent DNA ligase family. LigA subfamily. The cofactor is Mg(2+). Mn(2+) serves as cofactor.

It catalyses the reaction NAD(+) + (deoxyribonucleotide)n-3'-hydroxyl + 5'-phospho-(deoxyribonucleotide)m = (deoxyribonucleotide)n+m + AMP + beta-nicotinamide D-nucleotide.. In terms of biological role, DNA ligase that catalyzes the formation of phosphodiester linkages between 5'-phosphoryl and 3'-hydroxyl groups in double-stranded DNA using NAD as a coenzyme and as the energy source for the reaction. It is essential for DNA replication and repair of damaged DNA. The polypeptide is DNA ligase (Streptococcus pyogenes serotype M1).